Here is a 207-residue protein sequence, read N- to C-terminus: UPF0319 protein VV2327 (207 aa).

Positions methionine 1–alanine 18 are cleaved as a signal peptide.

Belongs to the UPF0319 family.

The sequence is that of UPF0319 protein VV2327 from Vibrio vulnificus (strain YJ016).